The sequence spans 506 residues: Epstein-Barr nuclear antigen leader protein (506 aa).

Disordered stretches follow at residues 1-470 (MGDR…PRPP) and 485-506 (FEPP…EDED). Ser-35 carries the post-translational modification Phosphoserine; by host.

The protein belongs to the lymphocryptovirus EBNA-LP family. In terms of assembly, homooligomer. Interacts with host SP100; this interaction is important for EBNA-LP coactivator activity. Interacts with host HAX1, ERR1 and HSPA2. Interacts with host PRKDC and AKAP8L; these interactions modulate the coactivator function of EBNA-LP. In terms of processing, phosphorylated by the cellular protein kinase cdc2.

The protein resides in the host nucleus. In terms of biological role, plays an important role in the establishment of B-cell immortalization by acting as an EBNA2 coactivator. This transcriptional activation preferentially enhances the expression of the major viral protein LMP1. The interaction between EBNA-LP and host SP100 correlates with coactivation of EBNA2 and the relocalization of SP100 from PML nuclear bodies into nucleoplasm. In Epstein-Barr virus (strain B95-8) (HHV-4), this protein is Epstein-Barr nuclear antigen leader protein (EBNA-LP).